Reading from the N-terminus, the 132-residue chain is Small ribosomal subunit protein uS8 (132 aa).

The protein belongs to the universal ribosomal protein uS8 family. As to quaternary structure, part of the 30S ribosomal subunit. Contacts proteins S5 and S12.

Functionally, one of the primary rRNA binding proteins, it binds directly to 16S rRNA central domain where it helps coordinate assembly of the platform of the 30S subunit. The chain is Small ribosomal subunit protein uS8 from Rickettsia akari (strain Hartford).